A 269-amino-acid chain; its full sequence is Surfeit locus protein 4 (269 aa).

The next 5 helical transmembrane spans lie at 64 to 84 (LLASSFVFLNLLGQLTGCVLV), 92 to 112 (YACFGLFGIIALQTIAYSILW), 179 to 199 (FFSIVQNIVGTALMILVAIGF), 203 to 223 (LAALTLVVWLFAINVYFNAFW), and 239 to 259 (FFQTMSVIGGLLLVVALGPGG). The short motif at 266 to 269 (KKEW) is the Di-lysine motif element.

This sequence belongs to the SURF4 family. As to quaternary structure, found in a complex composed at least of SURF4, TMED2 and TMED10. May interact with LMAN1. Interacts with ZFYVE27 and with KIF5A in a ZFYVE27-dependent manner. Interacts with STING1. Interacts with SAR1B. Interacts with TMEM41B.

It localises to the endoplasmic reticulum membrane. The protein localises to the endoplasmic reticulum-Golgi intermediate compartment membrane. The protein resides in the golgi apparatus membrane. Endoplasmic reticulum cargo receptor that mediates the export of lipoproteins by recruiting cargos into COPII vesicles to facilitate their secretion. Acts as a cargo receptor for lipoproteins bearing both APOB and APOA1, thereby regulating lipoprotein delivery and the maintenance of lipid homeostasis. Synergizes with the GTPase SAR1B to mediate transport of circulating lipoproteins. Promotes the secretion of PCSK9. Also mediates the efficient secretion of erythropoietin (EPO). May also play a role in the maintenance of the architecture of the endoplasmic reticulum-Golgi intermediate compartment and of the Golgi. This is Surfeit locus protein 4 from Homo sapiens (Human).